The chain runs to 567 residues: Structural protein ORF567 (567 aa).

The segment at 7–393 (INALLGFPEE…MPIEHKPEQQ (387 aa)) is disordered. The segment covering 65–79 (TPTPIRPAPPPPPPI) has biased composition (pro residues). Basic and acidic residues predominate over residues 180-200 (PKREPEHHTHGSTNNEHESKR). The segment covering 219–231 (THQTSPSHSSGGT) has biased composition (low complexity). Pro residues-rich tracts occupy residues 253 to 278 (MPIP…PTPP) and 285 to 299 (TPTP…PPPT). Positions 300–312 (HGSSSTNSSGSTN) are enriched in low complexity. Pro residues predominate over residues 319–335 (PKPIPIPPTPPPPPPHH). The segment covering 343-353 (PKHESEHHDHG) has biased composition (basic and acidic residues). Over residues 354 to 372 (SSSTNSSSSTSNSSSGGTN) the composition is skewed to low complexity.

Its subcellular location is the virion. The polypeptide is Structural protein ORF567 (Acidianus two-tailed virus (ATV)).